A 476-amino-acid chain; its full sequence is Transposase for transposon Tn5 (476 aa).

Residues 1 to 70 form an interaction with DNA region; the sequence is MITSALHRAA…YRFIRNPNVS (70 aa). Residues Asp97 and Asp188 each coordinate Mg(2+). Interaction with DNA stretches follow at residues 237 to 255 and 319 to 348; these read YQISIPQKGVVDKRGKRKN and YTHRWRIEEFHKAWKTGAGAERQRMEEPDN. Residue Glu326 participates in Mg(2+) binding. Residues 369 to 476 are important for dimerization; that stretch reads SFTLPQALRA…KDLMAQGIKI (108 aa).

This sequence belongs to the transposase 11 family. As to quaternary structure, monomer. Homodimer of tnp (isoform 1), and heterodimer of tnp (isoform 1) and inh (isoform 2). It depends on Mg(2+) as a cofactor.

Functionally, mediates transposition of transposon Tn5 by a 'cut and paste' mechanism. First, the monomeric transposase binds the 19 bp inverted DNA repeats flanking the transposon. Then, dimerization of the DNA-bound transposase creates a synaptic DNA complex. After nicking of the first DNA strand, excision of the transposon proceeds through a series of intermediates. The transposase then mediates the insertion of the transposon at a new site by strand transfer. The activity of the wild-type transposase is very low, and is further inhibited by dimerization with the transposase inhibitor (inh). In Escherichia coli, this protein is Transposase for transposon Tn5 (tnpA).